Here is a 188-residue protein sequence, read N- to C-terminus: Ribosome maturation factor RimM (188 aa).

Residues 103–177 (EEGWYYADLI…RVVIDPPAGT (75 aa)) form the PRC barrel domain.

Belongs to the RimM family. Binds ribosomal protein uS19.

It localises to the cytoplasm. Its function is as follows. An accessory protein needed during the final step in the assembly of 30S ribosomal subunit, possibly for assembly of the head region. Essential for efficient processing of 16S rRNA. May be needed both before and after RbfA during the maturation of 16S rRNA. It has affinity for free ribosomal 30S subunits but not for 70S ribosomes. The protein is Ribosome maturation factor RimM of Parvibaculum lavamentivorans (strain DS-1 / DSM 13023 / NCIMB 13966).